The chain runs to 500 residues: Transcription factor-like 5 protein (500 aa).

Pro residues-rich tracts occupy residues 1-12 (MSGPGPREPPPE) and 196-210 (AEPP…PPEP). Disordered stretches follow at residues 1–34 (MSGP…ALGE) and 191–211 (FNSI…PEPG). Positions 347–356 (MRQLDTNVER) are R3 epitope (recognized by Chagas's antibodies). A disordered region spans residues 365–410 (VGEGATATQGAWQSSESSQANLGEQAQSGPQGGRSQRRERHNRMER). A compositionally biased stretch (polar residues) spans 370–393 (TATQGAWQSSESSQANLGEQAQSG). The bHLH domain maps to 400–450 (QRRERHNRMERDRRRRIRICCDELNLLVPFCNAETDKATTLQWTTAFLKYI). The tract at residues 481–500 (SLVTCPAQGSLQSSPSMEIK) is R1 epitope (recognized by Chagas's antibodies).

As to quaternary structure, efficient DNA binding requires dimerization with another bHLH protein. As to expression, isoform 3 is testis specific. Isoform 2 is pancreas specific.

The protein resides in the nucleus. Putative transcription factor. Isoform 3 may play a role in early spermatogenesis. This chain is Transcription factor-like 5 protein (TCFL5), found in Homo sapiens (Human).